A 265-amino-acid chain; its full sequence is Keratinocyte-associated transmembrane protein 2 (265 aa).

Positions 1 to 49 (MAAAALKRMRGPAQAKLLPGSAIQALVGLARPLVLALLLVSAALSSVVS) are cleaved as a signal peptide. Residues 50–196 (RTDSPSPTVL…MPSSNIEEED (147 aa)) lie on the Extracellular side of the membrane. Over residues 72–96 (THENQTKPSISQISTTLPPTMSTEK) the composition is skewed to polar residues. Disordered stretches follow at residues 72 to 123 (THEN…EDPS) and 135 to 168 (SPST…SDDT). Asn-75 carries an N-linked (GlcNAc...) asparagine glycan. Over residues 114-123 (EEADNNEDPS) the composition is skewed to acidic residues. The chain crosses the membrane as a helical span at residues 197–217 (SHFFFHLIIFAFCIAVVYITY). At 218–265 (HNKRKIFLLVQSRKWRDGLCSKTVEYHRLDQNVNEAMPSLKITNDYTF) the chain is on the cytoplasmic side. Ser-229 and Ser-256 each carry phosphoserine.

It is found in the membrane. The protein is Keratinocyte-associated transmembrane protein 2 (KCT2) of Pongo abelii (Sumatran orangutan).